The following is a 382-amino-acid chain: tRNA-specific 2-thiouridylase MnmA (382 aa).

Residues 18–25 (AMSGGVDS) and leucine 44 contribute to the ATP site. Cysteine 112 serves as the catalytic Nucleophile. A disulfide bridge links cysteine 112 with cysteine 209. An ATP-binding site is contributed by glycine 136. An interaction with tRNA region spans residues 159–161 (RDQ). Cysteine 209 serves as the catalytic Cysteine persulfide intermediate.

The protein belongs to the MnmA/TRMU family.

It localises to the cytoplasm. The catalysed reaction is S-sulfanyl-L-cysteinyl-[protein] + uridine(34) in tRNA + AH2 + ATP = 2-thiouridine(34) in tRNA + L-cysteinyl-[protein] + A + AMP + diphosphate + H(+). In terms of biological role, catalyzes the 2-thiolation of uridine at the wobble position (U34) of tRNA, leading to the formation of s(2)U34. This is tRNA-specific 2-thiouridylase MnmA from Methylobacterium nodulans (strain LMG 21967 / CNCM I-2342 / ORS 2060).